Here is a 113-residue protein sequence, read N- to C-terminus: Pro-FMRFamide-related neuropeptide FF (113 aa).

The first 20 residues, 1-20, serve as a signal peptide directing secretion; sequence MDSRQAAALLVLLLLIDGGC. Residues 21–65 constitute a propeptide that is removed on maturation; the sequence is AEGPGGQQEDQLSAEEDSEPLPPQDAQTSGSLLHYLLQAMERPGR. Residues 22-48 are disordered; that stretch reads EGPGGQQEDQLSAEEDSEPLPPQDAQT. Phe76 is modified (phenylalanine amide). The propeptide occupies 79-92; the sequence is NTQGSWRNEWLSPR. Phe110 carries the post-translational modification Phenylalanine amide.

This sequence belongs to the FARP (FMRFamide related peptide) family.

It is found in the secreted. Functionally, morphine modulating peptides. Have wide-ranging physiologic effects, including the modulation of morphine-induced analgesia, elevation of arterial blood pressure, and increased somatostatin secretion from the pancreas. Neuropeptide FF potentiates and sensitizes ASIC1 and ASIC3 channels. This Homo sapiens (Human) protein is Pro-FMRFamide-related neuropeptide FF.